A 464-amino-acid polypeptide reads, in one-letter code: ATP synthase subunit beta (464 aa).

154–161 contacts ATP; that stretch reads GGAGVGKT.

The protein belongs to the ATPase alpha/beta chains family. In terms of assembly, F-type ATPases have 2 components, CF(1) - the catalytic core - and CF(0) - the membrane proton channel. CF(1) has five subunits: alpha(3), beta(3), gamma(1), delta(1), epsilon(1). CF(0) has three main subunits: a(1), b(2) and c(9-12). The alpha and beta chains form an alternating ring which encloses part of the gamma chain. CF(1) is attached to CF(0) by a central stalk formed by the gamma and epsilon chains, while a peripheral stalk is formed by the delta and b chains.

Its subcellular location is the cell membrane. It carries out the reaction ATP + H2O + 4 H(+)(in) = ADP + phosphate + 5 H(+)(out). Functionally, produces ATP from ADP in the presence of a proton gradient across the membrane. The catalytic sites are hosted primarily by the beta subunits. The polypeptide is ATP synthase subunit beta (Mycoplasmopsis synoviae (strain 53) (Mycoplasma synoviae)).